The sequence spans 178 residues: UPF0228 protein MM_0401 (178 aa).

This sequence belongs to the UPF0228 family.

This is UPF0228 protein MM_0401 from Methanosarcina mazei (strain ATCC BAA-159 / DSM 3647 / Goe1 / Go1 / JCM 11833 / OCM 88) (Methanosarcina frisia).